Reading from the N-terminus, the 145-residue chain is MIALIQRVSRASVVVDNQTIGAIDKGLLVLLGVEQEDTREKMEKLATKVMSYRVFSDENGKMNLNLEQVGGSLLVVSQFTLAADTGRGLRPSFSGAGTPDQALALYEEFVAFCRAKGVTTETGQFGADMQVSLVNDGPVTFNLQV.

Residues 137 to 138 (GP) carry the Gly-cisPro motif, important for rejection of L-amino acids motif.

Belongs to the DTD family. Homodimer.

It is found in the cytoplasm. The enzyme catalyses glycyl-tRNA(Ala) + H2O = tRNA(Ala) + glycine + H(+). The catalysed reaction is a D-aminoacyl-tRNA + H2O = a tRNA + a D-alpha-amino acid + H(+). In terms of biological role, an aminoacyl-tRNA editing enzyme that deacylates mischarged D-aminoacyl-tRNAs. Also deacylates mischarged glycyl-tRNA(Ala), protecting cells against glycine mischarging by AlaRS. Acts via tRNA-based rather than protein-based catalysis; rejects L-amino acids rather than detecting D-amino acids in the active site. By recycling D-aminoacyl-tRNA to D-amino acids and free tRNA molecules, this enzyme counteracts the toxicity associated with the formation of D-aminoacyl-tRNA entities in vivo and helps enforce protein L-homochirality. This Shewanella baltica (strain OS195) protein is D-aminoacyl-tRNA deacylase.